We begin with the raw amino-acid sequence, 720 residues long: GTPase-activating protein gyp2 (720 aa).

The GRAM domain maps to 20 to 85 (LDPASFFRIN…AAVRKLEREN (66 aa)). One can recognise a Rab-GAP TBC domain in the interval 216-404 (GIPNNLRADI…RILDCLFVNG (189 aa)).

Its subcellular location is the cytoplasm. It localises to the nucleus. In terms of biological role, stimulates specifically the GTPase activity of ypt2 and ryh1. Inactivates ryh1 during recycling between the endosome and the Golgi compartments. In Schizosaccharomyces pombe (strain 972 / ATCC 24843) (Fission yeast), this protein is GTPase-activating protein gyp2.